Here is a 509-residue protein sequence, read N- to C-terminus: Putative thymidine phosphorylase (509 aa).

This sequence belongs to the thymidine/pyrimidine-nucleoside phosphorylase family. Type 2 subfamily.

It catalyses the reaction thymidine + phosphate = 2-deoxy-alpha-D-ribose 1-phosphate + thymine. The sequence is that of Putative thymidine phosphorylase from Bradyrhizobium sp. (strain ORS 278).